The chain runs to 845 residues: Dynein axonemal assembly factor 5 (845 aa).

8 HEAT repeats span residues D47–P84, E138–T175, P180–A217, S260–N297, Q332–A369, N523–A561, S674–E715, and A766–E803.

This sequence belongs to the DNAAF5 family. In terms of tissue distribution, expressed in testis.

The protein resides in the cytoplasm. The protein localises to the dynein axonemal particle. Cytoplasmic protein involved in the delivery of the dynein machinery to the motile cilium. It is required for the assembly of the axonemal dynein inner and outer arms, two structures attached to the peripheral outer doublet A microtubule of the axoneme, that play a crucial role in cilium motility. The polypeptide is Dynein axonemal assembly factor 5 (Drosophila melanogaster (Fruit fly)).